We begin with the raw amino-acid sequence, 840 residues long: Probable alpha-glucuronidase A (840 aa).

The signal sequence occupies residues 1 to 19; it reads MWSGIPIFALLSSIGIAAA. N-linked (GlcNAc...) asparagine glycosylation is found at Asn-50, Asn-149, Asn-222, Asn-262, Asn-279, Asn-310, Asn-465, Asn-527, Asn-576, Asn-610, Asn-682, Asn-723, and Asn-732.

The protein belongs to the glycosyl hydrolase 67 family.

Its subcellular location is the secreted. The catalysed reaction is an alpha-D-glucuronoside + H2O = D-glucuronate + an alcohol. Its function is as follows. Alpha-glucuronidase involved in the hydrolysis of xylan, a major structural heterogeneous polysaccharide found in plant biomass representing the second most abundant polysaccharide in the biosphere, after cellulose. Releases 4-O-methylglucuronic acid from xylan. The sequence is that of Probable alpha-glucuronidase A (aguA) from Aspergillus fumigatus (strain ATCC MYA-4609 / CBS 101355 / FGSC A1100 / Af293) (Neosartorya fumigata).